The primary structure comprises 1325 residues: Nucleoporin nup146 (1325 aa).

Disordered stretches follow at residues 1 to 20, 453 to 474, 758 to 951, and 973 to 994; these read MNAE…AGGS, VRAS…FVKN, GEGL…PKIH, and FPKQ…QESL. Residues 763-778 are compositionally biased toward polar residues; it reads QQKTSKALPSTGITKL. The span at 779–791 shows a compositional bias: basic and acidic residues; sequence SENDNEKAEESNE. The segment covering 792–801 has biased composition (polar residues); the sequence is TKGFNTTIAK. The segment covering 802 to 811 has biased composition (basic and acidic residues); it reads QNDKSSKSEG. Polar residues-rich tracts occupy residues 816-835 and 850-861; these read ANMS…SKPS and FTFNKPSETPPF. Residues 867–881 show a composition bias toward basic and acidic residues; that stretch reads LVEKESKQDVSDTSD. T899 carries the post-translational modification Phosphothreonine. The span at 927–937 shows a compositional bias: acidic residues; that stretch reads SEIEDQDEESS. The residue at position 946 (T946) is a Phosphothreonine. A phosphoserine mark is found at S1041, S1043, and S1044.

The protein localises to the cytoplasm. Its subcellular location is the nucleus. Its function is as follows. Functions as a component of the nuclear pore complex (NPC). NPC components, collectively referred to as nucleoporins (NUPs), can play the role of both NPC structural components and of docking or interaction partners for transiently associated nuclear transport factors. Active directional transport is assured by both, a Phe-Gly (FG) repeat affinity gradient for these transport factors across the NPC and a transport cofactor concentration gradient across the nuclear envelope. This is Nucleoporin nup146 (nup146) from Schizosaccharomyces pombe (strain 972 / ATCC 24843) (Fission yeast).